The sequence spans 502 residues: Glutamate--tRNA ligase (502 aa).

The 'HIGH' region motif lies at 9–19 (PSPTGDPHVGT). Residues cysteine 106, cysteine 108, cysteine 133, and histidine 135 each contribute to the Zn(2+) site. Positions 250-254 (KLSKR) match the 'KMSKS' region motif. Residue lysine 253 coordinates ATP.

Belongs to the class-I aminoacyl-tRNA synthetase family. Glutamate--tRNA ligase type 1 subfamily. As to quaternary structure, monomer. Requires Zn(2+) as cofactor.

It is found in the cytoplasm. It catalyses the reaction tRNA(Glu) + L-glutamate + ATP = L-glutamyl-tRNA(Glu) + AMP + diphosphate. In terms of biological role, catalyzes the attachment of glutamate to tRNA(Glu) in a two-step reaction: glutamate is first activated by ATP to form Glu-AMP and then transferred to the acceptor end of tRNA(Glu). The chain is Glutamate--tRNA ligase from Protochlamydia amoebophila (strain UWE25).